A 484-amino-acid polypeptide reads, in one-letter code: ATP synthase subunit beta (484 aa).

152 to 159 is an ATP binding site; sequence GGAGVGKT.

The protein belongs to the ATPase alpha/beta chains family. In terms of assembly, F-type ATPases have 2 components, CF(1) - the catalytic core - and CF(0) - the membrane proton channel. CF(1) has five subunits: alpha(3), beta(3), gamma(1), delta(1), epsilon(1). CF(0) has three main subunits: a(1), b(2) and c(9-12). The alpha and beta chains form an alternating ring which encloses part of the gamma chain. CF(1) is attached to CF(0) by a central stalk formed by the gamma and epsilon chains, while a peripheral stalk is formed by the delta and b chains.

The protein localises to the cell inner membrane. It carries out the reaction ATP + H2O + 4 H(+)(in) = ADP + phosphate + 5 H(+)(out). In terms of biological role, produces ATP from ADP in the presence of a proton gradient across the membrane. The catalytic sites are hosted primarily by the beta subunits. This chain is ATP synthase subunit beta, found in Campylobacter lari (strain RM2100 / D67 / ATCC BAA-1060).